The sequence spans 699 residues: UvrABC system protein B (699 aa).

In terms of domain architecture, Helicase ATP-binding spans 35–188 (ERINNGEKDV…DHLLRKFVSM (154 aa)). 48–55 (GATGTGKS) contacts ATP. A Beta-hairpin motif is present at residues 101–124 (YYDYYQPEAYVAQTDTFIEKDSSI). The 167-residue stretch at 438 to 604 (QIDDLLGEIR…PLRKKIADIT (167 aa)) folds into the Helicase C-terminal domain. Positions 654-689 (VGLIEQLTEQMHGAAAELQFEVAARIRDEVKELKRE) constitute a UVR domain.

It belongs to the UvrB family. In terms of assembly, forms a heterotetramer with UvrA during the search for lesions. Interacts with UvrC in an incision complex.

It localises to the cytoplasm. Its function is as follows. The UvrABC repair system catalyzes the recognition and processing of DNA lesions. A damage recognition complex composed of 2 UvrA and 2 UvrB subunits scans DNA for abnormalities. Upon binding of the UvrA(2)B(2) complex to a putative damaged site, the DNA wraps around one UvrB monomer. DNA wrap is dependent on ATP binding by UvrB and probably causes local melting of the DNA helix, facilitating insertion of UvrB beta-hairpin between the DNA strands. Then UvrB probes one DNA strand for the presence of a lesion. If a lesion is found the UvrA subunits dissociate and the UvrB-DNA preincision complex is formed. This complex is subsequently bound by UvrC and the second UvrB is released. If no lesion is found, the DNA wraps around the other UvrB subunit that will check the other stand for damage. The sequence is that of UvrABC system protein B from Paenarthrobacter aurescens (strain TC1).